We begin with the raw amino-acid sequence, 340 residues long: Phosphate acyltransferase (340 aa).

Belongs to the PlsX family. Homodimer. Probably interacts with PlsY.

Its subcellular location is the cytoplasm. It carries out the reaction a fatty acyl-[ACP] + phosphate = an acyl phosphate + holo-[ACP]. Its pathway is lipid metabolism; phospholipid metabolism. Its function is as follows. Catalyzes the reversible formation of acyl-phosphate (acyl-PO(4)) from acyl-[acyl-carrier-protein] (acyl-ACP). This enzyme utilizes acyl-ACP as fatty acyl donor, but not acyl-CoA. This Clostridioides difficile (strain 630) (Peptoclostridium difficile) protein is Phosphate acyltransferase.